We begin with the raw amino-acid sequence, 126 residues long: UPF0102 protein DNO_0639 (126 aa).

The protein belongs to the UPF0102 family.

The protein is UPF0102 protein DNO_0639 of Dichelobacter nodosus (strain VCS1703A).